We begin with the raw amino-acid sequence, 771 residues long: Myotubularin-related protein 10 (771 aa).

One can recognise a Myotubularin phosphatase domain in the interval 217-657 (FETYSDWDRE…THIKLWKLCY (441 aa)). Residues Ser-603 and Ser-745 each carry the phosphoserine modification.

It belongs to the protein-tyrosine phosphatase family. Non-receptor class myotubularin subfamily.

In Mus musculus (Mouse), this protein is Myotubularin-related protein 10 (Mtmr10).